Consider the following 60-residue polypeptide: Prokaryotic ubiquitin-like protein UBact (60 aa).

The segment at 1 to 60 (MPERKTQPTTDQPWTKPNDGGDESGPRSPEVERPNTRDLLERMKRVDPRQARRYRQRSGE) is disordered. Over residues 29–50 (PEVERPNTRDLLERMKRVDPRQ) the composition is skewed to basic and acidic residues. The segment covering 51-60 (ARRYRQRSGE) has biased composition (basic residues). Residue E60 forms an Isoglutamyl lysine isopeptide (Glu-Lys) (interchain with K-? in acceptor proteins) linkage.

It belongs to the ubiquitin-like protein UBact family.

Functionally, may function as a protein modifier covalently attached to lysine residues of substrate proteins. This may serve to target the modified proteins for degradation by proteasomes. The protein is Prokaryotic ubiquitin-like protein UBact of Fraserbacteria sp. (strain RBG_16_55_9).